Here is a 239-residue protein sequence, read N- to C-terminus: Probable transcriptional regulatory protein ACL_0044 (239 aa).

Belongs to the TACO1 family.

The protein localises to the cytoplasm. The sequence is that of Probable transcriptional regulatory protein ACL_0044 from Acholeplasma laidlawii (strain PG-8A).